Here is a 128-residue protein sequence, read N- to C-terminus: Large ribosomal subunit protein bL17 (128 aa).

The protein belongs to the bacterial ribosomal protein bL17 family. In terms of assembly, part of the 50S ribosomal subunit. Contacts protein L32.

The polypeptide is Large ribosomal subunit protein bL17 (Streptococcus mutans serotype c (strain ATCC 700610 / UA159)).